Reading from the N-terminus, the 204-residue chain is Tumor necrosis factor alpha-induced protein 8-like protein 3 (204 aa).

Residues M1–E10 are compositionally biased toward acidic residues. A disordered region spans residues M1–H20. The tract at residues V21 to L204 is binding to phosphoinositides.

Belongs to the TNFAIP8 family. Widely expressed (at protein level).

The protein resides in the cytoplasm. Its subcellular location is the cell membrane. In terms of biological role, acts as a lipid transfer protein. Preferentially captures and shuttles two lipid second messengers, i.e., phosphatidylinositol 4,5- bisphosphate and phosphatidylinositol 3,4,5-trisphosphate and increases their levels in the plasma membrane. Additionally, may also function as a lipid-presenting protein to enhance the activity of the PI3K-AKT and MEK-ERK pathways. May act as a regulator of tumorigenesis through its activation of phospholipid signaling. The protein is Tumor necrosis factor alpha-induced protein 8-like protein 3 (Tnfaip8l3) of Mus musculus (Mouse).